Here is a 682-residue protein sequence, read N- to C-terminus: Potassium-transporting ATPase ATP-binding subunit (682 aa).

4 helical membrane-spanning segments follow: residues 34–54 (PVMF…LAMV), 58–78 (IAGS…TVLF), 219–239 (IALT…TATL), and 254–274 (VLVA…LSAI). Catalysis depends on D307, which acts as the 4-aspartylphosphate intermediate. Residues D344, E348, 377–384 (FTAQSRMS), and K395 contribute to the ATP site. Mg(2+) is bound by residues D518 and D522. 3 helical membrane passes run 588-608 (FAII…LNVM), 616-636 (AILS…PLAL), and 662-682 (LVVP…LGLA).

The protein belongs to the cation transport ATPase (P-type) (TC 3.A.3) family. Type IA subfamily. The system is composed of three essential subunits: KdpA, KdpB and KdpC.

It is found in the cell inner membrane. The catalysed reaction is K(+)(out) + ATP + H2O = K(+)(in) + ADP + phosphate + H(+). Functionally, part of the high-affinity ATP-driven potassium transport (or Kdp) system, which catalyzes the hydrolysis of ATP coupled with the electrogenic transport of potassium into the cytoplasm. This subunit is responsible for energy coupling to the transport system and for the release of the potassium ions to the cytoplasm. This is Potassium-transporting ATPase ATP-binding subunit from Salmonella paratyphi B (strain ATCC BAA-1250 / SPB7).